The chain runs to 77 residues: Small ribosomal subunit protein bS21 (77 aa).

The segment covering 38 to 52 (KPSEKRAREKAEAIR) has biased composition (basic and acidic residues). A disordered region spans residues 38-77 (KPSEKRAREKAEAIRRTRKLARKRAQREGIVSNGRTASVR). The span at 53 to 62 (RTRKLARKRA) shows a compositional bias: basic residues.

The protein belongs to the bacterial ribosomal protein bS21 family.

This chain is Small ribosomal subunit protein bS21, found in Bartonella bacilliformis (strain ATCC 35685 / KC583 / Herrer 020/F12,63).